Here is a 658-residue protein sequence, read N- to C-terminus: Putative phospholipase B-like lamina ancestor (658 aa).

A signal peptide spans 1–29; the sequence is MLKVVGASWQKTRIGTYILIGAGLLVIGA. 3 N-linked (GlcNAc...) asparagine glycosylation sites follow: Asn-229, Asn-465, and Asn-486.

It belongs to the phospholipase B-like family. In terms of tissue distribution, expressed in neural and glial progenitors prior to, but not after, differentiation. Not expressed in late third instar disks, but is expressed uniformly by early third instar disks, in the imaginal ring of the proventriculus and in the salivary gland.

The protein resides in the secreted. Putative phospholipase. Involved in the regulation of cellular plasticity in imaginal disks. This is Putative phospholipase B-like lamina ancestor (lama) from Drosophila melanogaster (Fruit fly).